Consider the following 282-residue polypeptide: 2,3,4,5-tetrahydropyridine-2,6-dicarboxylate N-succinyltransferase (282 aa).

Substrate contacts are provided by Arg-109 and Asp-146.

The protein belongs to the transferase hexapeptide repeat family. As to quaternary structure, homotrimer.

The protein localises to the cytoplasm. It carries out the reaction (S)-2,3,4,5-tetrahydrodipicolinate + succinyl-CoA + H2O = (S)-2-succinylamino-6-oxoheptanedioate + CoA. It functions in the pathway amino-acid biosynthesis; L-lysine biosynthesis via DAP pathway; LL-2,6-diaminopimelate from (S)-tetrahydrodipicolinate (succinylase route): step 1/3. In Bartonella quintana (strain Toulouse) (Rochalimaea quintana), this protein is 2,3,4,5-tetrahydropyridine-2,6-dicarboxylate N-succinyltransferase.